Here is a 361-residue protein sequence, read N- to C-terminus: Peptide chain release factor 1 (361 aa).

Gln-235 bears the N5-methylglutamine mark.

It belongs to the prokaryotic/mitochondrial release factor family. Methylated by PrmC. Methylation increases the termination efficiency of RF1.

It is found in the cytoplasm. Functionally, peptide chain release factor 1 directs the termination of translation in response to the peptide chain termination codons UAG and UAA. In Chlamydia felis (strain Fe/C-56) (Chlamydophila felis), this protein is Peptide chain release factor 1.